The primary structure comprises 287 residues: 4-hydroxybenzoate octaprenyltransferase (287 aa).

A run of 9 helical transmembrane segments spans residues 19 to 39 (PIGT…ASSG), 43 to 63 (LQML…GCAI), 94 to 114 (VVVA…LNIF), 118 to 138 (LSVL…FLAI), 142 to 162 (VLGI…LDFI), 167 to 187 (WVLF…YAMV), 209 to 229 (VLAI…VAHL), 235 to 255 (YFLI…KLVS), and 263 to 283 (FLAF…IVLG).

The protein belongs to the UbiA prenyltransferase family. Mg(2+) serves as cofactor.

Its subcellular location is the cell inner membrane. The enzyme catalyses all-trans-octaprenyl diphosphate + 4-hydroxybenzoate = 4-hydroxy-3-(all-trans-octaprenyl)benzoate + diphosphate. The protein operates within cofactor biosynthesis; ubiquinone biosynthesis. Its function is as follows. Catalyzes the prenylation of para-hydroxybenzoate (PHB) with an all-trans polyprenyl group. Mediates the second step in the final reaction sequence of ubiquinone-8 (UQ-8) biosynthesis, which is the condensation of the polyisoprenoid side chain with PHB, generating the first membrane-bound Q intermediate 3-octaprenyl-4-hydroxybenzoate. The protein is 4-hydroxybenzoate octaprenyltransferase of Polynucleobacter asymbioticus (strain DSM 18221 / CIP 109841 / QLW-P1DMWA-1) (Polynucleobacter necessarius subsp. asymbioticus).